The chain runs to 108 residues: Large ribosomal subunit protein bL31B (108 aa).

The tract at residues 88–108 (AAVEEAPAVKSKKKAPIKKKK) is disordered. Over residues 97-108 (KSKKKAPIKKKK) the composition is skewed to basic residues.

It belongs to the bacterial ribosomal protein bL31 family. Type B subfamily. Part of the 50S ribosomal subunit.

This is Large ribosomal subunit protein bL31B from Chlamydia abortus (strain DSM 27085 / S26/3) (Chlamydophila abortus).